Here is a 783-residue protein sequence, read N- to C-terminus: Rho GTPase-activating protein gacR (783 aa).

Residues Ala-138–Ile-188 are a coiled coil. The interval Gln-262–Ile-299 is disordered. The span at Thr-283–Ile-299 shows a compositional bias: low complexity. Residues Met-319–Phe-509 enclose the Rho-GAP domain. The segment covering Gly-527–Gly-539 has biased composition (gly residues). Residues Gly-527–Ser-745 are disordered. 4 stretches are compositionally biased toward low complexity: residues Ser-568–Ala-589, Pro-599–Pro-630, Pro-641–Leu-651, and Ser-661–Thr-698. Residues Asn-706–Asn-738 show a composition bias toward polar residues.

Its subcellular location is the cytoplasm. In terms of biological role, rho GTPase-activating protein involved in the signal transduction pathway. The polypeptide is Rho GTPase-activating protein gacR (gacR) (Dictyostelium discoideum (Social amoeba)).